A 629-amino-acid polypeptide reads, in one-letter code: 5-aminolevulinate synthase, mitochondrial (629 aa).

A mitochondrion-targeting transit peptide spans 1–69 (MDSVLRQSKA…VQSARTGGRA (69 aa)). Substrate-binding residues include arginine 155, serine 268, and lysine 287. Pyridoxal 5'-phosphate-binding residues include serine 320, histidine 348, and threonine 388. Lysine 391 is an active-site residue. N6-(pyridoxal phosphate)lysine is present on lysine 391. Residues threonine 420 and threonine 421 each coordinate pyridoxal 5'-phosphate. A substrate-binding site is contributed by threonine 506.

Belongs to the class-II pyridoxal-phosphate-dependent aminotransferase family. As to quaternary structure, homodimer. Requires pyridoxal 5'-phosphate as cofactor.

The protein resides in the mitochondrion matrix. The catalysed reaction is succinyl-CoA + glycine + H(+) = 5-aminolevulinate + CO2 + CoA. Its pathway is porphyrin-containing compound metabolism; protoporphyrin-IX biosynthesis; 5-aminolevulinate from glycine: step 1/1. In terms of biological role, catalyzes the synthesis of 5-aminolevulinate (ALA) from succinyl-CoA and glycine, the first and rate-limiting step in heme biosynthesis. In Neurospora crassa (strain ATCC 24698 / 74-OR23-1A / CBS 708.71 / DSM 1257 / FGSC 987), this protein is 5-aminolevulinate synthase, mitochondrial (alv-1).